The following is a 2176-amino-acid chain: Protein sidekick-2 (2176 aa).

An N-terminal signal peptide occupies residues 1–24 (MFSSMWRLPLWTLLALHRIHSAGA). Residues 25–1936 (QDDVPPYFKT…ASPFYEEWWF (1912 aa)) lie on the Extracellular side of the membrane. Ig-like C2-type domains are found at residues 30-112 (PYFK…TEVQ), 117-204 (GSFE…QPIT), 219-298 (PTII…SSVA), 312-402 (PQFV…LAVT), 406-495 (PNIT…ADLV), and 500-589 (TRIT…AHLR). C52 and C95 are oxidised to a cystine. N197 carries an N-linked (GlcNAc...) asparagine glycan. 4 disulfide bridges follow: C241-C288, C334-C384, C427-C479, and C521-C573. Fibronectin type-III domains are found at residues 596 to 692 (APEH…LPEE), 697 to 793 (PPQN…TLQG), 798 to 897 (PPGN…THED), 901 to 995 (PVGH…VPPE), 999 to 1098 (APTN…TLQA), 1103 to 1201 (APAN…TRES), 1206 to 1303 (GPTN…TLDD), 1307 to 1401 (PPMG…TEKR), 1406 to 1503 (PPSK…TLQA), 1508 to 1625 (APTI…VGEA), 1630 to 1726 (APQN…TQQA), 1730 to 1825 (APGS…TGPG), and 1828 to 1930 (APGP…ASPF). A glycan (N-linked (GlcNAc...) asparagine) is linked at N747. N940 and N952 each carry an N-linked (GlcNAc...) asparagine glycan. N1106 carries an N-linked (GlcNAc...) asparagine glycan. N1592 carries N-linked (GlcNAc...) asparagine glycosylation. The segment at 1712-1734 (DGPRSTPTRGQTQQAAPSAPGSV) is disordered. Residues 1716–1727 (STPTRGQTQQAA) are compositionally biased toward polar residues. The helical transmembrane segment at 1937 to 1957 (LVVIALVGLIFILLLVFVLII) threads the bilayer. Topologically, residues 1958 to 2176 (RGQSKKYSKK…APIAGFSSFV (219 aa)) are cytoplasmic. Disordered regions lie at residues 2013–2032 (GLYT…YSDE), 2043–2070 (AESS…VDTN), and 2102–2176 (QAYS…SSFV). Polar residues-rich tracts occupy residues 2044–2070 (ESSS…VDTN) and 2119–2129 (VPNSNSTQQGS). The short motif at 2170–2176 (AGFSSFV) is the PDZ-binding element.

The protein belongs to the sidekick family. As to quaternary structure, homodimer; mediates homophilic interactions to promote cell adhesion. Interacts (via PDZ-binding motif) with MAGI1, MAGI2, DLG2, DLG3 and DLG4. As to expression, expressed in retinal ganglion cells (RGCs) that form synapses in distinct inner plexiform layer (IPL) sublaminae. Specifically expressed in specific subsets of retinal ganglion cells (RGCs), named W3B-RGCs, that specifically respond when the timing of the movement of a small object differs from that of the background, but not when they coincide (at protein level). Also present in excitatory amacrine cell type called VG3-ACs, that provide strong and selective input W3B-RGCs (at protein level). Expressed at low levels in the glomeruli.

It localises to the cell membrane. It is found in the synapse. Functionally, adhesion molecule that promotes lamina-specific synaptic connections in the retina and is specifically required for the formation of neuronal circuits that detect motion. Acts by promoting formation of synapses between two specific retinal cell types: the retinal ganglion cells W3B-RGCs and the excitatory amacrine cells VG3-ACs. Formation of synapses between these two cells plays a key role in detection of motion. Promotes synaptic connectivity via homophilic interactions. The polypeptide is Protein sidekick-2 (Mus musculus (Mouse)).